The following is a 349-amino-acid chain: Hydroxymethylglutaryl-CoA synthase (349 aa).

(3S)-3-hydroxy-3-methylglutaryl-CoA contacts are provided by Asp29 and Ala30. The active-site Proton donor/acceptor is the Glu81. Positions 113 and 154 each coordinate (3S)-3-hydroxy-3-methylglutaryl-CoA. The active-site Acyl-thioester intermediate is Cys113. Arg202 contributes to the CoA binding site. (3S)-3-hydroxy-3-methylglutaryl-CoA-binding residues include Thr204 and His237. The active-site Proton donor/acceptor is the His237. Residue Lys242 coordinates CoA. (3S)-3-hydroxy-3-methylglutaryl-CoA-binding residues include Lys246, Asn269, and Ser299.

This sequence belongs to the thiolase-like superfamily. Archaeal HMG-CoA synthase family. Interacts with acetoacetyl-CoA thiolase that catalyzes the precedent step in the pathway and with a DUF35 protein. The acetoacetyl-CoA thiolase/HMG-CoA synthase complex channels the intermediate via a fused CoA-binding site, which allows for efficient coupling of the endergonic thiolase reaction with the exergonic HMGCS reaction.

It carries out the reaction acetoacetyl-CoA + acetyl-CoA + H2O = (3S)-3-hydroxy-3-methylglutaryl-CoA + CoA + H(+). It functions in the pathway metabolic intermediate biosynthesis; (R)-mevalonate biosynthesis; (R)-mevalonate from acetyl-CoA: step 2/3. In terms of biological role, catalyzes the condensation of acetyl-CoA with acetoacetyl-CoA to form 3-hydroxy-3-methylglutaryl-CoA (HMG-CoA). Functions in the mevalonate (MVA) pathway leading to isopentenyl diphosphate (IPP), a key precursor for the biosynthesis of isoprenoid compounds that are building blocks of archaeal membrane lipids. The protein is Hydroxymethylglutaryl-CoA synthase of Methanosarcina mazei (strain ATCC BAA-159 / DSM 3647 / Goe1 / Go1 / JCM 11833 / OCM 88) (Methanosarcina frisia).